The chain runs to 132 residues: Small ribosomal subunit protein uS8 (132 aa).

The protein belongs to the universal ribosomal protein uS8 family. As to quaternary structure, part of the 30S ribosomal subunit. Contacts proteins S5 and S12.

Its function is as follows. One of the primary rRNA binding proteins, it binds directly to 16S rRNA central domain where it helps coordinate assembly of the platform of the 30S subunit. The sequence is that of Small ribosomal subunit protein uS8 from Streptococcus agalactiae serotype V (strain ATCC BAA-611 / 2603 V/R).